A 515-amino-acid chain; its full sequence is 2-isopropylmalate synthase (515 aa).

In terms of domain architecture, Pyruvate carboxyltransferase spans 4–266 (INIFDTTLRD…ETRLNLQEIK (263 aa)). 4 residues coordinate Mn(2+): Asp13, His201, His203, and Asn237. The segment at 391 to 515 (QLSSLQVQYG…RAENQKVAMQ (125 aa)) is regulatory domain.

Belongs to the alpha-IPM synthase/homocitrate synthase family. LeuA type 1 subfamily. As to quaternary structure, homodimer. Mn(2+) is required as a cofactor.

The protein resides in the cytoplasm. The enzyme catalyses 3-methyl-2-oxobutanoate + acetyl-CoA + H2O = (2S)-2-isopropylmalate + CoA + H(+). The protein operates within amino-acid biosynthesis; L-leucine biosynthesis; L-leucine from 3-methyl-2-oxobutanoate: step 1/4. Functionally, catalyzes the condensation of the acetyl group of acetyl-CoA with 3-methyl-2-oxobutanoate (2-ketoisovalerate) to form 3-carboxy-3-hydroxy-4-methylpentanoate (2-isopropylmalate). This chain is 2-isopropylmalate synthase, found in Geobacillus sp. (strain WCH70).